Consider the following 555-residue polypeptide: (+)-delta-cadinene synthase isozyme A (555 aa).

Positions 1–22 are disordered; sequence MASQASQVLASPHPAISSENRP. Mg(2+) is bound by residues aspartate 308, aspartate 312, aspartate 452, and glutamate 456. Positions 308-312 match the DDXXD motif motif; the sequence is DDTYD.

The protein belongs to the terpene synthase family. The cofactor is Mg(2+).

The catalysed reaction is (2E,6E)-farnesyl diphosphate = (1S,8aR)-delta-cadinene + diphosphate. It functions in the pathway secondary metabolite biosynthesis; terpenoid biosynthesis. In terms of biological role, responsible for the cyclization of trans,trans-farnesyl diphosphate (FPP) to (+)-delta cadinene. This chain is (+)-delta-cadinene synthase isozyme A (CAD1-A), found in Gossypium arboreum (Tree cotton).